Here is a 73-residue protein sequence, read N- to C-terminus: UPF0435 protein Lm4b_01721 (73 aa).

Belongs to the UPF0435 family.

The polypeptide is UPF0435 protein Lm4b_01721 (Listeria monocytogenes serotype 4b (strain CLIP80459)).